The following is a 154-amino-acid chain: Large ribosomal subunit protein uL15 (154 aa).

The segment at M1–S54 is disordered.

It belongs to the universal ribosomal protein uL15 family. As to quaternary structure, part of the 50S ribosomal subunit.

Functionally, binds to the 23S rRNA. This Deinococcus geothermalis (strain DSM 11300 / CIP 105573 / AG-3a) protein is Large ribosomal subunit protein uL15.